Reading from the N-terminus, the 94-residue chain is Aspartyl/glutamyl-tRNA(Asn/Gln) amidotransferase subunit C (94 aa).

It belongs to the GatC family. In terms of assembly, heterotrimer of A, B and C subunits.

The enzyme catalyses L-glutamyl-tRNA(Gln) + L-glutamine + ATP + H2O = L-glutaminyl-tRNA(Gln) + L-glutamate + ADP + phosphate + H(+). It catalyses the reaction L-aspartyl-tRNA(Asn) + L-glutamine + ATP + H2O = L-asparaginyl-tRNA(Asn) + L-glutamate + ADP + phosphate + 2 H(+). Its function is as follows. Allows the formation of correctly charged Asn-tRNA(Asn) or Gln-tRNA(Gln) through the transamidation of misacylated Asp-tRNA(Asn) or Glu-tRNA(Gln) in organisms which lack either or both of asparaginyl-tRNA or glutaminyl-tRNA synthetases. The reaction takes place in the presence of glutamine and ATP through an activated phospho-Asp-tRNA(Asn) or phospho-Glu-tRNA(Gln). This Opitutus terrae (strain DSM 11246 / JCM 15787 / PB90-1) protein is Aspartyl/glutamyl-tRNA(Asn/Gln) amidotransferase subunit C.